Reading from the N-terminus, the 754-residue chain is uncharacterized protein (754 aa).

The next 10 membrane-spanning stretches (helical) occupy residues 3–23, 24–44, 50–70, 223–243, 254–274, 320–340, 370–390, 392–412, 446–466, and 471–491; these read ITTV…LPQL, PGTL…FIPV, IALT…ILWA, HLMA…AGLI, WIHW…YAWL, VAIL…LIFW, LLLM…SFIA, LLAI…AMVV, WINI…LLVV, and AWRT…WPLW.

This sequence to B.subtilis ComEC, N.gonorrhoeae ComA, and H.influenzae Rec2.

The protein resides in the cell membrane. This is an uncharacterized protein from Escherichia coli (strain K12).